The chain runs to 177 residues: Probable chemoreceptor glutamine deamidase CheD (177 aa).

This sequence belongs to the CheD family.

It carries out the reaction L-glutaminyl-[protein] + H2O = L-glutamyl-[protein] + NH4(+). Its function is as follows. Probably deamidates glutamine residues to glutamate on methyl-accepting chemotaxis receptors (MCPs), playing an important role in chemotaxis. The sequence is that of Probable chemoreceptor glutamine deamidase CheD from Pseudomonas fluorescens (strain SBW25).